The chain runs to 126 residues: MSIIGIGIDFVEILRIKNIFLKYGDKFARKILSTEEWKKYILIDDSISFLAKKFVAKEAASKALGTGINHQITFNQLEFYKNKSGKPKLRFLKHALKKSKEIQCKSIHVSISDQKLYAYALVILEN.

2 residues coordinate Mg(2+): Asp-9 and Glu-58.

It belongs to the P-Pant transferase superfamily. AcpS family. Mg(2+) is required as a cofactor.

It is found in the cytoplasm. The catalysed reaction is apo-[ACP] + CoA = holo-[ACP] + adenosine 3',5'-bisphosphate + H(+). Its function is as follows. Transfers the 4'-phosphopantetheine moiety from coenzyme A to a Ser of acyl-carrier-protein. This chain is Holo-[acyl-carrier-protein] synthase, found in Buchnera aphidicola subsp. Acyrthosiphon pisum (strain APS) (Acyrthosiphon pisum symbiotic bacterium).